A 644-amino-acid chain; its full sequence is Archaeal Lon protease (644 aa).

Over residues 1–18 (MKTTIKNSRTQESVSYEG) the composition is skewed to polar residues. Residues 1 to 30 (MKTTIKNSRTQESVSYEGNETKKGTGETLS) are disordered. Residues 1-137 (MKTTIKNSRT…KARSQDEKKN (137 aa)) are Cytoplasmic-facing. 71–78 (GEPGVGKS) lines the ATP pocket. A run of 2 helical transmembrane segments spans residues 138–155 (LFMMLIISFILVLGFMMN) and 156–171 (QFLAAIIAAGIIFLAL). Residues 172–644 (QQFRPRTTVM…PSIMKKPAMH (473 aa)) lie on the Cytoplasmic side of the membrane. A Lon proteolytic domain is found at 438 to 617 (GGEVGRVNGL…GDVLEHALIG (180 aa)). Residues Ser524 and Lys567 contribute to the active site.

This sequence belongs to the peptidase S16 family. Archaeal LonB subfamily. As to quaternary structure, homohexamer. Organized in a ring with a central cavity.

The protein resides in the cell membrane. Its function is as follows. ATP-dependent serine protease that mediates the selective degradation of mutant and abnormal proteins as well as certain short-lived regulatory proteins. Degrades polypeptides processively. The chain is Archaeal Lon protease from Methanothermobacter thermautotrophicus (strain ATCC 29096 / DSM 1053 / JCM 10044 / NBRC 100330 / Delta H) (Methanobacterium thermoautotrophicum).